The chain runs to 828 residues: Periplasmic nitrate reductase (828 aa).

The segment at residues 1–31 (MKLSRRSFMKANAVAAAAAAAGLSVPGVARA) is a signal peptide (tat-type signal). Residues 39–95 (IKWDKAPCRFCGTGCGVLVGTQQGRVVACQGDPDAPVNRGLNCIKGYFLPKIMYGKD) enclose the 4Fe-4S Mo/W bis-MGD-type domain. Residues cysteine 46, cysteine 49, cysteine 53, and cysteine 81 each contribute to the [4Fe-4S] cluster site. Mo-bis(molybdopterin guanine dinucleotide) contacts are provided by residues lysine 83, glutamine 150, asparagine 175, cysteine 179, 212 to 219 (WGANMAEM), 243 to 247 (STYQH), 262 to 264 (QSD), methionine 372, glutamine 376, asparagine 482, 508 to 509 (SD), lysine 531, aspartate 558, and 718 to 727 (TGRVLEHWHT). Phenylalanine 794 serves as a coordination point for substrate. Mo-bis(molybdopterin guanine dinucleotide) contacts are provided by asparagine 802 and lysine 819.

It belongs to the prokaryotic molybdopterin-containing oxidoreductase family. NasA/NapA/NarB subfamily. In terms of assembly, component of the periplasmic nitrate reductase NapAB complex composed of NapA and NapB. [4Fe-4S] cluster serves as cofactor. It depends on Mo-bis(molybdopterin guanine dinucleotide) as a cofactor. Predicted to be exported by the Tat system. The position of the signal peptide cleavage has not been experimentally proven.

It is found in the periplasm. It catalyses the reaction 2 Fe(II)-[cytochrome] + nitrate + 2 H(+) = 2 Fe(III)-[cytochrome] + nitrite + H2O. In terms of biological role, catalytic subunit of the periplasmic nitrate reductase complex NapAB. Receives electrons from NapB and catalyzes the reduction of nitrate to nitrite. This chain is Periplasmic nitrate reductase, found in Escherichia coli O9:H4 (strain HS).